Here is a 416-residue protein sequence, read N- to C-terminus: UDP-N-acetylmuramoylalanine--D-glutamate ligase (416 aa).

Residue G104–T110 participates in ATP binding.

It belongs to the MurCDEF family.

It is found in the cytoplasm. It catalyses the reaction UDP-N-acetyl-alpha-D-muramoyl-L-alanine + D-glutamate + ATP = UDP-N-acetyl-alpha-D-muramoyl-L-alanyl-D-glutamate + ADP + phosphate + H(+). The protein operates within cell wall biogenesis; peptidoglycan biosynthesis. Its function is as follows. Cell wall formation. Catalyzes the addition of glutamate to the nucleotide precursor UDP-N-acetylmuramoyl-L-alanine (UMA). This Francisella tularensis subsp. tularensis (strain WY96-3418) protein is UDP-N-acetylmuramoylalanine--D-glutamate ligase.